The primary structure comprises 204 residues: Large ribosomal subunit protein eL15 (204 aa).

The protein belongs to the eukaryotic ribosomal protein eL15 family. In terms of assembly, component of the large ribosomal subunit.

The protein resides in the cytoplasm. Its function is as follows. Component of the large ribosomal subunit. The ribosome is a large ribonucleoprotein complex responsible for the synthesis of proteins in the cell. This Mylopharyngodon piceus (Black carp) protein is Large ribosomal subunit protein eL15 (rpl15).